The chain runs to 122 residues: NADH-ubiquinone oxidoreductase chain 3 (122 aa).

The next 3 membrane-spanning stretches (helical) occupy residues 12 to 32 (VLIF…LSYV), 66 to 86 (LVAI…PWAV), and 91 to 111 (VTIF…VGFI).

It belongs to the complex I subunit 3 family.

It is found in the mitochondrion membrane. It catalyses the reaction a ubiquinone + NADH + 5 H(+)(in) = a ubiquinol + NAD(+) + 4 H(+)(out). In terms of biological role, core subunit of the mitochondrial membrane respiratory chain NADH dehydrogenase (Complex I) that is believed to belong to the minimal assembly required for catalysis. Complex I functions in the transfer of electrons from NADH to the respiratory chain. The immediate electron acceptor for the enzyme is believed to be ubiquinone. The polypeptide is NADH-ubiquinone oxidoreductase chain 3 (NAD3) (Reclinomonas americana).